The sequence spans 776 residues: MQHFSRTFLAASIATALFAPYAQAEAILNNSVQEMPTTDQCLVDAEKNDANAEIVIQADNLQAINGDKAIYSGDVEVTQGNKKITAESVTLHQQENIVVAEGNVTFNDGEVKASSSKVTNNMTSETFSLENTEYQFLCQQGRGQAAYIAKTGQAVYELEDGSITSCPADDNAWRLVASSIEVDQNEETATFYHPRFEVLDVPVFYAPYLTLPIGNTRKTGFLFPSVNYGSSDGLEIEVPFYWNIAPNYDLTLTTLYMQQRGVKQDADFRYLSDGWGAGELKGEYLPGDEKYNDEDRWGYQYKHDGIINKQWLVSLDYSQVSDIDYFRDLSSDLGNREDGQLMQQGKVAYRSDFWDMSLQVRDFQILLQDNNQPYRLLPQVKFNFYTPLLGNYLNFDVKSELTQFDIQDASKPNALRAHVEPGLTIPLSTSWATWTTEARLLATYYQQDLDRLTDPTLKSQLDETVARVIPEYRSHARIYLEREAKLFEGYTQSLEPQIQYLYVPEEEQGNIYNYDTTLLQTDYYGLFRSRKYSSIDKIAAANQLSYGASTRFFDDEYKERLNISFGQIYYIDKKTKLTGNQEETSNYSSWAVETDFNYEDFLFYHGGIQYDIDLNAMQLANSTLEYQFTDGFIQGNYRYVTKDYIEDTISFDELDKITRKGISQAGIVGAYNINRHWSASGQYYYDLTEEIDLEWMASLRYQSDCWYIGFTYTNQLVKWRNDVVGGDSNNPVYDTNISVNFGIQGFATKNKAETAAKELDSTDNAITYGRPFYLNN.

The first 24 residues, 1-24 (MQHFSRTFLAASIATALFAPYAQA), serve as a signal peptide directing secretion.

This sequence belongs to the LptD family. In terms of assembly, component of the lipopolysaccharide transport and assembly complex. Interacts with LptE and LptA.

It localises to the cell outer membrane. In terms of biological role, together with LptE, is involved in the assembly of lipopolysaccharide (LPS) at the surface of the outer membrane. This Vibrio vulnificus (strain CMCP6) protein is LPS-assembly protein LptD.